Consider the following 186-residue polypeptide: MAGHRLVLVLGDLHIPHRCNSLPAKFKKLLVPGKIQHILCTGNLCTKDTYDYLKTLAGDVHVVRGDFDENLNYPEQKVVTVGQFKIGLIHGHQVIPWGDMASLALLQRQFDVDILISGHTHKFEAFEHENKFYINPGSATGAYHALENNIIPSFVLMDIQASTVVTYVYQLIGDDVKVERIEYKKS.

Belongs to the VPS29 family. Component of the commander complex consisting of the CCC subcomplex and the retriever subcomplex. Component of the heterotrimeric retriever complex formed by VPS26C, VPS29 and VPS35L; within the complex interacts with VPS35L. Component of the heterotrimeric retromer cargo-selective complex (CSC), also described as vacuolar protein sorting subcomplex (VPS), formed by VPS26 (VPS26A or VPS26B), VPS29 and VPS35. The CSC has a highly elongated structure with VPS26 and VPS29 binding independently at opposite distal ends of VPS35 as central platform. The CSC is believed to associate with variable sorting nexins to form functionally distinct retromer complex variants. The originally described retromer complex (also called SNX-BAR retromer) is a pentamer containing the CSC and a heterodimeric membrane-deforming subcomplex formed between SNX1 or SNX2 and SNX5 or SNX6 (also called SNX-BAR subcomplex); the respective CSC and SNX-BAR subcomplexes associate with low affinity. The CSC associates with SNX3 to form a SNX3-retromer complex. The CSC associates with SNX27, the WASH complex and the SNX-BAR subcomplex to form the SNX27-retromer complex. Interacts with VPS26A, VPS35, SNX1, SNX2, SNX3, SNX27, WASHC5. Interacts with TBC1D5; this interaction is blocked by VPS35L in the retriever complex. Interacts with SNX17; the interaction is indirect; SNX17 (via its C-terminus) interacts with the retriever complex (via VPS26C and VPS35L). Interacts with VPS26B and ANKRD27.

It is found in the cytoplasm. The protein localises to the membrane. Its subcellular location is the endosome membrane. Component of the commander complex that is essential for endosomal recycling of transmembrane cargos; the commander complex is composed of the CCC subcomplex and the retriever subcomplex. Component of the retriever complex, which is a heterotrimeric complex related to retromer cargo-selective complex (CSC) and essential for retromer-independent retrieval and recycling of numerous cargos such as integrin alpha-5/beta-1 (ITGA5:ITGB1). Component of the retromer cargo-selective complex (CSC). The CSC is believed to be the core functional component of retromer or respective retromer complex variants acting to prevent missorting of selected transmembrane cargo proteins into the lysosomal degradation pathway. The recruitment of the CSC to the endosomal membrane involves RAB7A and SNX3. The SNX-BAR retromer mediates retrograde transport of cargo proteins from endosomes to the trans-Golgi network (TGN) and is involved in endosome-to-plasma membrane transport for cargo protein recycling. The SNX3-retromer mediates the retrograde endosome-to-TGN transport of WLS distinct from the SNX-BAR retromer pathway. The SNX27-retromer is believed to be involved in endosome-to-plasma membrane trafficking and recycling of a broad spectrum of cargo proteins. The CSC seems to act as recruitment hub for other proteins, such as the WASH complex and TBC1D5. Required to regulate transcytosis of the polymeric immunoglobulin receptor (pIgR-pIgA). In the endosomes, retriever complex drives the retrieval and recycling of NxxY-motif-containing cargo proteins by coupling to SNX17, a cargo essential for the homeostatic maintenance of numerous cell surface proteins associated with processes that include cell migration, cell adhesion, nutrient supply and cell signaling. The recruitment of the retriever complex to the endosomal membrane involves CCC and WASH complexes. Involved in GLUT1 endosome-to-plasma membrane trafficking; the function is dependent of association with ANKRD27. This Gallus gallus (Chicken) protein is Vacuolar protein sorting-associated protein 29 (VPS29).